Reading from the N-terminus, the 407-residue chain is Arylacetamide deacetylase-like 4 family member 1 (407 aa).

Residues Met-1 to Leu-4 lie on the Cytoplasmic side of the membrane. Residues Val-5–Ile-25 form a helical; Signal-anchor for type II membrane protein membrane-spanning segment. Over Asp-26 to Leu-407 the chain is Lumenal. An Involved in the stabilization of the negatively charged intermediate by the formation of the oxyanion hole motif is present at residues His-119–Gly-121. Asn-168 is a glycosylation site (N-linked (GlcNAc...) asparagine). Catalysis depends on residues Ser-193, Asp-347, and His-377.

It belongs to the 'GDXG' lipolytic enzyme family.

Its subcellular location is the membrane. The protein is Arylacetamide deacetylase-like 4 family member 1 of Mus musculus (Mouse).